The primary structure comprises 1615 residues: Ferredoxin-dependent glutamate synthase, chloroplastic (1615 aa).

A chloroplast-targeting transit peptide spans 1 to 52 (MATLPRAAAAAAPSPAAALLPLPRAAPLLAGRAAARSAARRLRARGTRAPPL). Residue Cys-97 is the Nucleophile of the active site. The Glutamine amidotransferase type-2 domain maps to 97-496 (CGVGFVANLK…PGMMITVDLQ (400 aa)). Residue 1175–1232 (LSETHQTLIQNGLRERVVLRVDGGFRSGLDVLMAAAMGADEYGFGSVAMIATGCVMAR) participates in FMN binding. [3Fe-4S] cluster-binding residues include Cys-1228, Cys-1234, and Cys-1239.

The protein belongs to the glutamate synthase family. [3Fe-4S] cluster is required as a cofactor. The cofactor is FAD. FMN serves as cofactor. As to expression, expressed in leaf blades and at lower levels in roots.

It localises to the plastid. Its subcellular location is the chloroplast. The catalysed reaction is 2 oxidized [2Fe-2S]-[ferredoxin] + 2 L-glutamate = L-glutamine + 2 reduced [2Fe-2S]-[ferredoxin] + 2-oxoglutarate + 2 H(+). It functions in the pathway amino-acid biosynthesis; L-glutamate biosynthesis via GLT pathway; L-glutamate from 2-oxoglutarate and L-glutamine (ferredoxin route): step 1/1. The protein operates within energy metabolism; nitrogen metabolism. In terms of biological role, involved in glutamate biosynthesis in leaf. Required for the reassimilation of ammonium ions generated during photorespiration. This chain is Ferredoxin-dependent glutamate synthase, chloroplastic (GLU), found in Oryza sativa subsp. japonica (Rice).